The chain runs to 26 residues: Thrombin-like enzyme LmrSP-3 (26 aa).

The protein belongs to the peptidase S1 family. Snake venom subfamily. As to expression, expressed by the venom gland.

The protein localises to the secreted. Functionally, thrombin-like snake venom serine protease that cleaves alpha-chain of fibrinogen (FGA) releases only fibrinopeptide A. Shows coagulant, esterase and amidase activities. The polypeptide is Thrombin-like enzyme LmrSP-3 (Lachesis muta rhombeata (Bushmaster)).